The following is a 299-amino-acid chain: MSSIKIECVLPENCRCGESPVWEEVSNSLLFVDIPAKKVCRWDSFTKQVQRVTMDAPVSSVALRQSGGYVATIGTKFCALNWKEQSAVVLATVDNDKKNNRFNDGKVDPAGRYFAGTMAEETAPAVLERHQGALYSLFPDHHVKKYFDQVDISNGLDWSLDHKIFYYIDSLSYSVDAFDYDLQTGQISNRRSVYKLEKEEQIPDGMCIDAEGKLWVACYNGGRVIRLDPVTGKRLQTVKLPVDKTTSCCFGGKNYSEMYVTCARDGMDPEGLLRQPEAGGIFKITGLGVKGIAPYSYAG.

Position 18 (Glu18) interacts with a divalent metal cation. Substrate-binding residues include Arg101, Asn103, and Glu121. The residue at position 144 (Lys144) is an N6-succinyllysine. 2 residues coordinate a divalent metal cation: Asn154 and Asp204. Residue Asp204 is the Proton donor/acceptor of the active site. 2 positions are modified to N6-succinyllysine: Lys244 and Lys253.

This sequence belongs to the SMP-30/CGR1 family. As to quaternary structure, monomer. Zn(2+) is required as a cofactor. The cofactor is Mn(2+). Ca(2+) serves as cofactor. Requires Mg(2+) as cofactor.

It localises to the cytoplasm. It catalyses the reaction D-glucono-1,5-lactone + H2O = D-gluconate + H(+). Its function is as follows. Gluconolactonase with low activity towards other sugar lactones, including gulonolactone and galactonolactone. Can also hydrolyze diisopropyl phosphorofluoridate and phenylacetate (in vitro). Calcium-binding protein. Modulates Ca(2+) signaling, and Ca(2+)-dependent cellular processes and enzyme activities. The protein is Regucalcin (RGN) of Homo sapiens (Human).